The chain runs to 136 residues: MTMTDPIADMLTRVRNASRAYHDSVVMPHSKIKTHIAEILQQEGYISSWHVDDATLAGGVGHTLVIDLKYGPNRERSIAGIKRISKPGLRVYAKATNLPKVLGGLGVAIISTSSGLLTDKQAGKRGVGGEVLAYVW.

It belongs to the universal ribosomal protein uS8 family. In terms of assembly, part of the 30S ribosomal subunit. Contacts proteins S5 and S12.

One of the primary rRNA binding proteins, it binds directly to 16S rRNA central domain where it helps coordinate assembly of the platform of the 30S subunit. This is Small ribosomal subunit protein uS8 from Frankia alni (strain DSM 45986 / CECT 9034 / ACN14a).